Here is a 514-residue protein sequence, read N- to C-terminus: Bifunctional purine biosynthesis protein PurH (514 aa).

The MGS-like domain occupies 1–143 (MTRRALISVS…KNHAGVLVLV (143 aa)).

This sequence belongs to the PurH family.

The catalysed reaction is (6R)-10-formyltetrahydrofolate + 5-amino-1-(5-phospho-beta-D-ribosyl)imidazole-4-carboxamide = 5-formamido-1-(5-phospho-D-ribosyl)imidazole-4-carboxamide + (6S)-5,6,7,8-tetrahydrofolate. It catalyses the reaction IMP + H2O = 5-formamido-1-(5-phospho-D-ribosyl)imidazole-4-carboxamide. Its pathway is purine metabolism; IMP biosynthesis via de novo pathway; 5-formamido-1-(5-phospho-D-ribosyl)imidazole-4-carboxamide from 5-amino-1-(5-phospho-D-ribosyl)imidazole-4-carboxamide (10-formyl THF route): step 1/1. The protein operates within purine metabolism; IMP biosynthesis via de novo pathway; IMP from 5-formamido-1-(5-phospho-D-ribosyl)imidazole-4-carboxamide: step 1/1. The sequence is that of Bifunctional purine biosynthesis protein PurH from Deinococcus geothermalis (strain DSM 11300 / CIP 105573 / AG-3a).